We begin with the raw amino-acid sequence, 507 residues long: Light-independent protochlorophyllide reductase subunit B (507 aa).

Asp-36 is a binding site for [4Fe-4S] cluster. Asp-293 (proton donor) is an active-site residue. Residue 428–429 coordinates substrate; that stretch reads GM.

This sequence belongs to the ChlB/BchB/BchZ family. In terms of assembly, protochlorophyllide reductase is composed of three subunits; ChlL, ChlN and ChlB. Forms a heterotetramer of two ChlB and two ChlN subunits. The cofactor is [4Fe-4S] cluster.

The protein localises to the plastid. It localises to the chloroplast. The catalysed reaction is chlorophyllide a + oxidized 2[4Fe-4S]-[ferredoxin] + 2 ADP + 2 phosphate = protochlorophyllide a + reduced 2[4Fe-4S]-[ferredoxin] + 2 ATP + 2 H2O. It functions in the pathway porphyrin-containing compound metabolism; chlorophyll biosynthesis (light-independent). Component of the dark-operative protochlorophyllide reductase (DPOR) that uses Mg-ATP and reduced ferredoxin to reduce ring D of protochlorophyllide (Pchlide) to form chlorophyllide a (Chlide). This reaction is light-independent. The NB-protein (ChlN-ChlB) is the catalytic component of the complex. The polypeptide is Light-independent protochlorophyllide reductase subunit B (Porphyra purpurea (Red seaweed)).